A 248-amino-acid chain; its full sequence is MENFKGLQKSLYIWTDSADLDKRVEQLKAATGGDVALENVHRLSFSSYANSSFDLIVIECAQLTDSYVKLLHMLKPSGKLHLVSFIGPAASLLQEIKLSGFINCREDSPDALTAEKPGYETGSSARLSFAKKNANAVNVWKISGDDEELIDEEELLDEEDKQKPDPAGLRVCSTTGKRKACKNCSCGLAEELETEKQSQKATENAKSSCGNCYLGDAFRCSTCPYLGMPAFKPGEKVQLADNLLKSDI.

Positions 4–129 (FKGLQKSLYI…ETGSSARLSF (126 aa)) are N-terminal SAM-like domain. A linker region spans residues 130–161 (AKKNANAVNVWKISGDDEELIDEEELLDEEDK). Positions 172, 181, 184, and 186 each coordinate [2Fe-2S] cluster. Residues 172-186 (CSTTGKRKACKNCSC) are fe-S binding site A. Residues Cys-209, Cys-212, Cys-220, and Cys-223 each contribute to the [4Fe-4S] cluster site. Short sequence motifs (cx2C motif) lie at residues 209-212 (CGNC) and 220-223 (CSTC). The fe-S binding site B stretch occupies residues 209–223 (CGNCYLGDAFRCSTC).

It belongs to the anamorsin family. Monomer. It depends on [2Fe-2S] cluster as a cofactor. Requires [4Fe-4S] cluster as cofactor.

It localises to the cytoplasm. Its subcellular location is the mitochondrion intermembrane space. Functionally, component of the cytosolic iron-sulfur (Fe-S) protein assembly (CIA) machinery. Required for the maturation of extramitochondrial Fe-S proteins. Part of an electron transfer chain functioning in an early step of cytosolic Fe-S biogenesis, facilitating the de novo assembly of a [4Fe-4S] cluster on the cytosolic Fe-S scaffold complex. Electrons are transferred from NADPH via a FAD- and FMN-containing diflavin oxidoreductase. Together with the diflavin oxidoreductase, also required for the assembly of the diferric tyrosyl radical cofactor of ribonucleotide reductase (RNR), probably by providing electrons for reduction during radical cofactor maturation in the catalytic small subunit. This chain is Anamorsin homolog, found in Drosophila simulans (Fruit fly).